The chain runs to 251 residues: uncharacterized protein (251 aa).

The segment at 192-238 adopts an RING-type zinc-finger fold; it reads CMMCVQRGDERVAITTPYTTDCGHTYCYACIMSRLKLVNNVSCPICK.

The protein resides in the cytoplasm. This is an uncharacterized protein from Schizosaccharomyces pombe (strain 972 / ATCC 24843) (Fission yeast).